Reading from the N-terminus, the 209-residue chain is Xanthine phosphoribosyltransferase 1 (209 aa).

The residue at position 79 (S79) is a Phosphoserine.

The protein localises to the cytoplasm. In terms of biological role, may act as a xanthine phosphoribosyltransferase involved in the synthesis of purine nucleotides. Such activity is however unclear in vivo. The polypeptide is Xanthine phosphoribosyltransferase 1 (XPT1) (Saccharomyces cerevisiae (strain ATCC 204508 / S288c) (Baker's yeast)).